Reading from the N-terminus, the 461-residue chain is D-phenylhydantoinase (461 aa).

3 residues coordinate a divalent metal cation: His59, His61, and Lys151. N6-carboxylysine is present on Lys151. Residue Tyr156 participates in substrate binding. Positions 182 and 239 each coordinate a divalent metal cation. Ser286 contacts substrate. Asp313 is a binding site for a divalent metal cation. Asn335 contacts substrate.

The protein belongs to the metallo-dependent hydrolases superfamily. Hydantoinase/dihydropyrimidinase family. As to quaternary structure, homotetramer. A divalent metal cation is required as a cofactor. Post-translationally, carboxylation allows a single lysine to coordinate two divalent metal cations.

The enzyme catalyses D-5-phenylhydantoin + H2O = N-carbamoyl-D-phenylglycine + H(+). Catalyzes the stereospecific hydrolysis of the cyclic amide bond of D-hydantoin derivatives with an aromatic side chains at the 5'-position. Has no activity on dihydropyrimidines. The physiological function is unknown. The sequence is that of D-phenylhydantoinase from Escherichia coli (strain UTI89 / UPEC).